A 611-amino-acid polypeptide reads, in one-letter code: Chloroplast sensor kinase, chloroplastic (611 aa).

Residues 1–79 (MLLSAIASQT…PGGGETMVAS (79 aa)) constitute a chloroplast transit peptide. The interval 17–50 (NLHFSNSIPNPRPSNPSLKLLNASSSSSSSSSSS) is disordered. A compositionally biased stretch (low complexity) spans 40–50 (SSSSSSSSSSS). Positions 116–300 (DFQRLCLEQL…VMDQKTMLLQ (185 aa)) are GAF. Residue cysteine 121 coordinates [3Fe-4S] cluster. Phosphoserine is present on serine 188. Residues 312-602 (KLVEQIRGPL…RVELWLPAFP (291 aa)) enclose the Histidine kinase domain. Residues 345–380 (VEDLIVQGDQIKDTLEELQDAVHLTKANIVRHNEEA) are a coiled coil. Positions 385-402 (NKTHNETRRSKYEHKDPI) are enriched in basic and acidic residues. The disordered stretch occupies residues 385-420 (NKTHNETRRSKYEHKDPIDGSQISSTRLSLGSGLDD).

Belongs to the chloroplast sensor kinase protein family. Self-interacts. Interacts with the plastoquinone analog 2,5-dibromo-3-methyl-5-isopropyl-p-benzoquinone (DBMIB) and with SIGA/SIG1. The cofactor is [3Fe-4S] cluster. Post-translationally, autophosphorylated, possibly on tyrosine residues, in photosystem I (PS I) light and in the presence of manganese ions Mn(2+), to a lesser degree, in the presence of calcium ions Ca(2+), but not in the presence of magnesium ions Mg(2+). Dithiothreitol (DTT) stimulates autophosphorylation. Phosphorylated on Ser-188 in vivo after exposure to far-red light (when plastoquinone (PQ) is oxidized). Not phosphorylated under orange light (reduces PQ).

It localises to the plastid. It is found in the chloroplast stroma. It carries out the reaction L-tyrosyl-[protein] + ATP = O-phospho-L-tyrosyl-[protein] + ADP + H(+). In terms of biological role, sensor kinase that senses the plastoquinone (PQ) redox state involved in stoichiometry adjustment of both photosystems (e.g. long-term adaptation via transcriptional regulation of reaction center genes of photosystems I and II) and state transitions (e.g. short-term adaptation involving reversible post-translational phosphorylation of light-harvesting complex II, LHC II), thus linking photosynthesis with gene expression in chloroplasts. Autophosphorylates, probably on a tyrosine residue. Probably phosphorylates SIGA/SIG1 in response to plastoquinone redox state modification. Reduced PQ suppresses its autophosphorylation activity. Represses expression of a number of chloroplast-encoded genes. In Arabidopsis thaliana (Mouse-ear cress), this protein is Chloroplast sensor kinase, chloroplastic.